A 56-amino-acid polypeptide reads, in one-letter code: Large ribosomal subunit protein bL33 (56 aa).

It belongs to the bacterial ribosomal protein bL33 family.

This chain is Large ribosomal subunit protein bL33, found in Halorhodospira halophila (strain DSM 244 / SL1) (Ectothiorhodospira halophila (strain DSM 244 / SL1)).